A 155-amino-acid chain; its full sequence is MYKMQLVACIALSLVLITNSAPTSSSTKETQQQLEQLLLDLKMLSKMVNNKDLKLPRMLTFKFYMPKRVTELKHLQCLVEELKPLENVLNLAQSQMSQLEHNGDLISNINITVLELKGSETTFMCDYDDEAATIVEFLNKWIIFCQSIISKRLDN.

The N-terminal stretch at 1–20 (MYKMQLVACIALSLVLITNS) is a signal peptide. O-linked (GalNAc...) threonine glycosylation occurs at threonine 23. Cysteine 77 and cysteine 125 form a disulfide bridge.

This sequence belongs to the IL-2 family.

It localises to the secreted. Its function is as follows. Cytokine produced by activated CD4-positive helper T-cells and to a lesser extend activated CD8-positive T-cells and natural killer (NK) cells that plays pivotal roles in the immune response and tolerance. Binds to a receptor complex composed of either the high-affinity trimeric IL-2R (IL2RA/CD25, IL2RB/CD122 and IL2RG/CD132) or the low-affinity dimeric IL-2R (IL2RB and IL2RG). Interaction with the receptor leads to oligomerization and conformation changes in the IL-2R subunits resulting in downstream signaling starting with phosphorylation of JAK1 and JAK3. In turn, JAK1 and JAK3 phosphorylate the receptor to form a docking site leading to the phosphorylation of several substrates including STAT5. This process leads to activation of several pathways including STAT, phosphoinositide-3-kinase/PI3K and mitogen-activated protein kinase/MAPK pathways. Functions as a T-cell growth factor and can increase NK-cell cytolytic activity as well. Promotes strong proliferation of activated B-cells and subsequently immunoglobulin production. Plays a pivotal role in regulating the adaptive immune system by controlling the survival and proliferation of regulatory T-cells, which are required for the maintenance of immune tolerance. Moreover, participates in the differentiation and homeostasis of effector T-cell subsets, including Th1, Th2, Th17 as well as memory CD8-positive T-cells. This chain is Interleukin-2 (IL2), found in Dasypus novemcinctus (Nine-banded armadillo).